Here is an 823-residue protein sequence, read N- to C-terminus: Degenerin-like protein asic-1 (823 aa).

The Cytoplasmic portion of the chain corresponds to 1–38; sequence MGKNSLKRALELDVVDFAEHTSAHGIPRAYVSTGWRRY. Residues 39–59 traverse the membrane as a helical segment; that stretch reads MWLLCFLFCLSCFGHQAYLIV. The Extracellular portion of the chain corresponds to 60-767; it reads ERFNRNDIIV…FGGQLGLWMG (708 aa). Cystine bridges form between Cys86/Cys518 and Cys494/Cys501. 5 N-linked (GlcNAc...) asparagine glycosylation sites follow: Asn228, Asn326, Asn347, Asn415, and Asn486. N-linked (GlcNAc...) asparagine glycans are attached at residues Asn527 and Asn546. 4 disulfide bridges follow: Cys604–Cys687, Cys625–Cys683, Cys629–Cys681, and Cys638–Cys664. The GAS motif; ion selectivity filter signature appears at 767 to 769; sequence GVS. Residues 768 to 788 form a helical membrane-spanning segment; that stretch reads VSVITIGEVACFFFEVFISLI. The Cytoplasmic portion of the chain corresponds to 789–795; sequence SSNRTKR.

It belongs to the amiloride-sensitive sodium channel (TC 1.A.6) family. As to quaternary structure, homotrimer. Heterotrimer; with other ASIC proteins producing channel with different properties.

It localises to the cell membrane. It is found in the postsynaptic cell membrane. Its subcellular location is the cell projection. The protein localises to the dendrite. The enzyme catalyses Na(+)(in) = Na(+)(out). It catalyses the reaction K(+)(in) = K(+)(out). It carries out the reaction Li(+)(in) = Li(+)(out). The catalysed reaction is Ca(2+)(in) = Ca(2+)(out). Its function is as follows. Forms voltage-independent, pH-gated trimeric sodium channels that act as postsynaptic excitatory receptors in the nervous system, playing a crucial role in regulating synaptic plasticity, learning, and memory. Promotes synaptic vesicle fusion to positively regulate the release of dopamine at dopaminergic neuron synapses. Displays high selectivity for sodium ions but can also permit the permeation of other cations. In Caenorhabditis elegans, this protein is Degenerin-like protein asic-1.